Consider the following 189-residue polypeptide: Phosphomevalonate kinase (189 aa).

ATP is bound by residues 10–16 (KRKCGKD) and arginine 138. Asparagine 168 serves as a coordination point for substrate.

The protein localises to the cytoplasm. Its subcellular location is the cytosol. It carries out the reaction (R)-5-phosphomevalonate + ATP = (R)-5-diphosphomevalonate + ADP. Its pathway is isoprenoid biosynthesis; isopentenyl diphosphate biosynthesis via mevalonate pathway; isopentenyl diphosphate from (R)-mevalonate: step 2/3. The sequence is that of Phosphomevalonate kinase from Drosophila melanogaster (Fruit fly).